Here is a 159-residue protein sequence, read N- to C-terminus: Ribosomal RNA large subunit methyltransferase H (159 aa).

S-adenosyl-L-methionine is bound by residues L76, G108, and 127–132 (FSKMTF).

This sequence belongs to the RNA methyltransferase RlmH family. In terms of assembly, homodimer.

The protein localises to the cytoplasm. The enzyme catalyses pseudouridine(1915) in 23S rRNA + S-adenosyl-L-methionine = N(3)-methylpseudouridine(1915) in 23S rRNA + S-adenosyl-L-homocysteine + H(+). Functionally, specifically methylates the pseudouridine at position 1915 (m3Psi1915) in 23S rRNA. The polypeptide is Ribosomal RNA large subunit methyltransferase H (Bacillus subtilis (strain 168)).